Here is a 350-residue protein sequence, read N- to C-terminus: Protein pelota homolog (350 aa).

This sequence belongs to the eukaryotic release factor 1 family. Pelota subfamily. As to quaternary structure, monomer. A divalent metal cation is required as a cofactor.

The protein localises to the cytoplasm. In terms of biological role, may function in recognizing stalled ribosomes, interact with stem-loop structures in stalled mRNA molecules, and effect endonucleolytic cleavage of the mRNA. May play a role in the release non-functional ribosomes and degradation of damaged mRNAs. Has endoribonuclease activity. The polypeptide is Protein pelota homolog (Methanosarcina acetivorans (strain ATCC 35395 / DSM 2834 / JCM 12185 / C2A)).